The sequence spans 351 residues: Homoserine O-acetyltransferase (351 aa).

One can recognise an AB hydrolase-1 domain in the interval 51-334 (VIWVLHALTG…IYGHDAFLIE (284 aa)). Ser146 (nucleophile) is an active-site residue. Arg212 provides a ligand contact to substrate. Residues Asp299 and His328 contribute to the active site. Asp329 lines the substrate pocket.

It belongs to the AB hydrolase superfamily. MetX family. As to quaternary structure, homodimer.

The protein resides in the cytoplasm. The catalysed reaction is L-homoserine + acetyl-CoA = O-acetyl-L-homoserine + CoA. It participates in amino-acid biosynthesis; L-methionine biosynthesis via de novo pathway; O-acetyl-L-homoserine from L-homoserine: step 1/1. Its function is as follows. Transfers an acetyl group from acetyl-CoA to L-homoserine, forming acetyl-L-homoserine. In Cyclobacterium marinum (strain ATCC 25205 / DSM 745 / LMG 13164 / NCIMB 1802) (Flectobacillus marinus), this protein is Homoserine O-acetyltransferase.